Consider the following 225-residue polypeptide: Orotate phosphoribosyltransferase (225 aa).

Lys32 is a 5-phospho-alpha-D-ribose 1-diphosphate binding site. Orotate is bound at residue 40-41 (FF). Residues 78-79 (YK), Arg104, Lys105, Lys108, His110, and 129-137 (DDVISAGTS) contribute to the 5-phospho-alpha-D-ribose 1-diphosphate site. Orotate-binding residues include Ser133 and Arg161.

It belongs to the purine/pyrimidine phosphoribosyltransferase family. PyrE subfamily. As to quaternary structure, homodimer. The cofactor is Mg(2+).

The enzyme catalyses orotidine 5'-phosphate + diphosphate = orotate + 5-phospho-alpha-D-ribose 1-diphosphate. It participates in pyrimidine metabolism; UMP biosynthesis via de novo pathway; UMP from orotate: step 1/2. Functionally, catalyzes the transfer of a ribosyl phosphate group from 5-phosphoribose 1-diphosphate to orotate, leading to the formation of orotidine monophosphate (OMP). The protein is Orotate phosphoribosyltransferase of Cupriavidus metallidurans (strain ATCC 43123 / DSM 2839 / NBRC 102507 / CH34) (Ralstonia metallidurans).